The sequence spans 326 residues: Apoptosis facilitator Bcl-2-like protein 14 (326 aa).

Serine 44 bears the Phosphoserine mark. Residues 100–147 are disordered; it reads AEKEEDSQSSPPEICAQAQRSGVPQARPRSPKWPRSRSSMDQRLEHKA. Residues 137–147 are compositionally biased toward basic and acidic residues; it reads SSMDQRLEHKA. A BH3 motif is present at residues 211-225; sequence IVELLKYSGEQLERE. Positions 307-314 match the BH2 motif; the sequence is WIQQHGGW.

It belongs to the Bcl-2 family. Phosphorylated by MELK, leading to inhibit its pro-apoptotic function.

It is found in the cytoplasm. Its function is as follows. Plays a role in apoptosis. In Bos taurus (Bovine), this protein is Apoptosis facilitator Bcl-2-like protein 14 (BCL2L14).